Reading from the N-terminus, the 160-residue chain is SsrA-binding protein (160 aa).

The interval 1–23 is disordered; sequence MARKKKQDKGQGPKTIAQNRRAR.

This sequence belongs to the SmpB family.

Its subcellular location is the cytoplasm. Required for rescue of stalled ribosomes mediated by trans-translation. Binds to transfer-messenger RNA (tmRNA), required for stable association of tmRNA with ribosomes. tmRNA and SmpB together mimic tRNA shape, replacing the anticodon stem-loop with SmpB. tmRNA is encoded by the ssrA gene; the 2 termini fold to resemble tRNA(Ala) and it encodes a 'tag peptide', a short internal open reading frame. During trans-translation Ala-aminoacylated tmRNA acts like a tRNA, entering the A-site of stalled ribosomes, displacing the stalled mRNA. The ribosome then switches to translate the ORF on the tmRNA; the nascent peptide is terminated with the 'tag peptide' encoded by the tmRNA and targeted for degradation. The ribosome is freed to recommence translation, which seems to be the essential function of trans-translation. This chain is SsrA-binding protein, found in Thermobifida fusca (strain YX).